We begin with the raw amino-acid sequence, 124 residues long: Urotensin-2 (124 aa).

An N-terminal signal peptide occupies residues 1 to 20 (MYKLASCCLLFIGFLNPLLS). The propeptide occupies 21-110 (LPLLDSREIS…HLLARIWKPY (90 aa)). Cys-118 and Cys-123 form a disulfide bridge.

It belongs to the urotensin-2 family. As to expression, brain specific.

Its subcellular location is the secreted. In terms of biological role, highly potent vasoconstrictor. The polypeptide is Urotensin-2 (UTS2) (Homo sapiens (Human)).